We begin with the raw amino-acid sequence, 78 residues long: D-alanyl carrier protein (78 aa).

In terms of domain architecture, Carrier spans 1–78 (MAFRENVLEI…MIITQLEALK (78 aa)). S36 bears the O-(pantetheine 4'-phosphoryl)serine mark.

The protein belongs to the DltC family. Post-translationally, 4'-phosphopantetheine is transferred from CoA to a specific serine of apo-DCP.

The protein localises to the cytoplasm. It participates in cell wall biogenesis; lipoteichoic acid biosynthesis. Its function is as follows. Carrier protein involved in the D-alanylation of lipoteichoic acid (LTA). The loading of thioester-linked D-alanine onto DltC is catalyzed by D-alanine--D-alanyl carrier protein ligase DltA. The DltC-carried D-alanyl group is further transferred to cell membrane phosphatidylglycerol (PG) by forming an ester bond, probably catalyzed by DltD. D-alanylation of LTA plays an important role in modulating the properties of the cell wall in Gram-positive bacteria, influencing the net charge of the cell wall. The polypeptide is D-alanyl carrier protein (Listeria monocytogenes serotype 4b (strain CLIP80459)).